The sequence spans 738 residues: Transcription activator of gluconeogenesis SMAC_06113 (738 aa).

The disordered stretch occupies residues 1 to 65 (MPDDVGPAEA…KYDPKDPLRP (65 aa)). 2 stretches are compositionally biased toward basic and acidic residues: residues 28-39 (ATTKDDDEKMAE) and 51-64 (GDQKKKYDPKDPLR). Positions 74 to 102 (CYACQRAHLTCGDERPCQRCIKRGLAEAC) form a DNA-binding region, zn(2)-C6 fungal-type. 4 disordered regions span residues 255-278 (SSGAAETPPRDPSISQQGTAGDVG), 328-404 (HAYA…KRQR), 530-579 (GTNS…KEQP), and 636-673 (SVPTTAGGSGSSNGTVVNGGPDSSPAGKTERERSTGAN). Polar residues-rich tracts occupy residues 337–351 (TSLQSPSTENNSPQP) and 530–540 (GTNSDTLSVSS). In terms of domain architecture, PAS spans 475-546 (ALFEHEEFMH…SVSSKGGRGG (72 aa)). 2 stretches are compositionally biased toward low complexity: residues 568-579 (QQQQSQQQKEQP) and 636-655 (SVPTTAGGSGSSNGTVVNGG).

Belongs to the ERT1/acuK family.

It localises to the nucleus. In terms of biological role, transcription factor which regulates nonfermentable carbon utilization. Activator of gluconeogenetic genes. The chain is Transcription activator of gluconeogenesis SMAC_06113 from Sordaria macrospora (strain ATCC MYA-333 / DSM 997 / K(L3346) / K-hell).